Here is a 207-residue protein sequence, read N- to C-terminus: Heat shock protein beta-1 (207 aa).

Position 12 is an omega-N-methylarginine (Arg-12). The residue at position 13 (Ser-13) is a Phosphoserine. Position 15 is a phosphoserine; by MAPKAPK2 and MAPKAPK3 (Ser-15). Position 27 is a phosphoserine (Ser-27). The segment at 72–207 is interaction with TGFB1I1; sequence APAYSRLLSR…AGKSEKPGTK (136 aa). Residues 78-186 enclose the sHSP domain; sequence LLSRQLSSGV…QSAEITIPVT (109 aa). Phosphoserine; by MAPKAPK2, MAPKAPK3 and MAPKAPK5 occurs at positions 80 and 84. A phosphoserine mark is found at Ser-85, Ser-88, and Ser-100. An N6-acetyllysine modification is found at Lys-125. The disordered stretch occupies residues 151–181; the sequence is DPTQVSSSLSPEGTLSVEAPLPKPATQSAEI. Residues 153–163 show a composition bias toward polar residues; that stretch reads TQVSSSLSPEG. A Phosphothreonine modification is found at Thr-176. Ser-178 and Ser-201 each carry phosphoserine.

This sequence belongs to the small heat shock protein (HSP20) family. Homooligomer. Homodimer; becomes monomeric upon activation. Heterooligomer; with HSPB6. Associates with alpha- and beta-tubulin. Interacts with TGFB1I1. Interacts with CRYAB. Interacts with HSPB8. Interacts with HSPBAP1. In terms of processing, phosphorylated upon exposure to protein kinase C activators and heat shock. Phosphorylation by MAPKAPK2 and MAPKAPK3 in response to stress dissociates HSPB1 from large small heat-shock protein (sHsps) oligomers and impairs its chaperone activity and ability to protect against oxidative stress effectively. Phosphorylation by MAPKAPK5 in response to PKA stimulation induces F-actin rearrangement.

Its subcellular location is the cytoplasm. The protein resides in the nucleus. It is found in the cytoskeleton. It localises to the spindle. Functionally, small heat shock protein which functions as a molecular chaperone probably maintaining denatured proteins in a folding-competent state. Plays a role in stress resistance and actin organization. Through its molecular chaperone activity may regulate numerous biological processes including the phosphorylation and the axonal transport of neurofilament proteins. This Sus scrofa (Pig) protein is Heat shock protein beta-1 (HSPB1).